The sequence spans 172 residues: Large ribosomal subunit protein uL10 (172 aa).

The protein belongs to the universal ribosomal protein uL10 family. Part of the ribosomal stalk of the 50S ribosomal subunit. The N-terminus interacts with L11 and the large rRNA to form the base of the stalk. The C-terminus forms an elongated spine to which L12 dimers bind in a sequential fashion forming a multimeric L10(L12)X complex.

Functionally, forms part of the ribosomal stalk, playing a central role in the interaction of the ribosome with GTP-bound translation factors. The polypeptide is Large ribosomal subunit protein uL10 (Rhizobium leguminosarum bv. trifolii (strain WSM2304)).